Reading from the N-terminus, the 546-residue chain is Chaperonin GroEL (546 aa).

Residues 29 to 32, Lys-50, 86 to 90, Gly-414, and Asp-492 each bind ATP; these read TMGP and DGTTT.

The protein belongs to the chaperonin (HSP60) family. In terms of assembly, forms a cylinder of 14 subunits composed of two heptameric rings stacked back-to-back. Interacts with the co-chaperonin GroES.

It localises to the cytoplasm. It carries out the reaction ATP + H2O + a folded polypeptide = ADP + phosphate + an unfolded polypeptide.. Together with its co-chaperonin GroES, plays an essential role in assisting protein folding. The GroEL-GroES system forms a nano-cage that allows encapsulation of the non-native substrate proteins and provides a physical environment optimized to promote and accelerate protein folding. This Helicobacter pylori (strain G27) protein is Chaperonin GroEL.